The sequence spans 259 residues: Ribosomal RNA small subunit methyltransferase J (259 aa).

S-adenosyl-L-methionine contacts are provided by residues 101 to 102 (RD), 117 to 118 (ER), 153 to 154 (SS), and Asp-176.

It belongs to the methyltransferase superfamily. RsmJ family.

The protein localises to the cytoplasm. It catalyses the reaction guanosine(1516) in 16S rRNA + S-adenosyl-L-methionine = N(2)-methylguanosine(1516) in 16S rRNA + S-adenosyl-L-homocysteine + H(+). Specifically methylates the guanosine in position 1516 of 16S rRNA. This Vibrio parahaemolyticus serotype O3:K6 (strain RIMD 2210633) protein is Ribosomal RNA small subunit methyltransferase J.